The following is a 408-amino-acid chain: E3 ubiquitin-protein ligase IE2 (408 aa).

A compositionally biased stretch (polar residues) spans 1–10 (MSRQINAATP). 2 disordered regions span residues 1–67 (MSRQ…ENVQ) and 176–199 (QSPDLFASPQSPQPQQQQQQQSEP). A compositionally biased stretch (basic residues) spans 13–25 (SRRHRLSLSRRRI). Over residues 30-47 (SPEAQPSSSSRSQPSSSS) the composition is skewed to low complexity. 4 consecutive repeat copies span residues 34–41 (QPSSSSRS), 42–49 (QPSSSSRS), 51–54 (RRQE), and 55–58 (RRQE). The interval 34 to 49 (QPSSSSRSQPSSSSRS) is 2 X 8 AA tandem repeats of Q-P-S-S-S-S-R-S. Residues 51–58 (RRQERRQE) are 2 X 4 AA tandem repeats of R-R-Q-E. Residues 183-197 (SPQSPQPQQQQQQQS) show a composition bias toward low complexity. The RING-type zinc finger occupies 207–255 (CNICFTTFKDTKNVNSSFVTSIHCNHAVCFKCYVKIIMDNSVYKCFCSA).

Belongs to the alphabaculovirus IE2 protein family. As to quaternary structure, homooligomer. Auto-ubiquitinated.

It localises to the host nucleus. The enzyme catalyses S-ubiquitinyl-[E2 ubiquitin-conjugating enzyme]-L-cysteine + [acceptor protein]-L-lysine = [E2 ubiquitin-conjugating enzyme]-L-cysteine + N(6)-ubiquitinyl-[acceptor protein]-L-lysine.. Its function is as follows. RING-finger E3 ubiquitin ligase that plays an important regulatory role during the initial stages of infection. Migrates to specific nuclear foci early in infection supposely to prepare the sites for viral transcription and replication by targeting and ubiquitinating host proteins. Acts as a transcriptional activator and activates a number of viral promoters including itself, IE1 and the promoter of 39K gene. In Lepidoptera (butterflies and moths), this protein is E3 ubiquitin-protein ligase IE2 (IE2).